The primary structure comprises 187 residues: MKLVLGISGASGIPLALRFLEKLPKEIEVFVVASKNAHVVALEESNINLKNAMKDLRPSGTFFNEQDIHASIASGSYGIHKMAIIPASMDMVAKIAHGFGGDLISRSASVMLKEKRPLLIAPREMPLSAIMLENLLKLSHSNAIIAPPMMTYYTQSKTLEAMQDFLVGKWFDSLGIENDLYPRWGMN.

FMN contacts are provided by residues Gly-9 to Ser-11, Ser-34, and Arg-123. Dimethylallyl phosphate is bound by residues Tyr-153 and Lys-169.

Belongs to the UbiX/PAD1 family.

The enzyme catalyses dimethylallyl phosphate + FMNH2 = prenylated FMNH2 + phosphate. Flavin prenyltransferase that catalyzes the synthesis of the prenylated FMN cofactor (prenyl-FMN) for 4-hydroxy-3-polyprenylbenzoic acid decarboxylase UbiD. The prenyltransferase is metal-independent and links a dimethylallyl moiety from dimethylallyl monophosphate (DMAP) to the flavin N5 and C6 atoms of FMN. The chain is Flavin prenyltransferase UbiX from Helicobacter pylori (strain ATCC 700392 / 26695) (Campylobacter pylori).